Here is a 404-residue protein sequence, read N- to C-terminus: Caspase-1 (404 aa).

Residues 1 to 91 (MADKVLKEKR…YLAGTLGLSA (91 aa)) enclose the CARD domain. Positions 1 to 119 (MADKVLKEKR…SFPAPQAVQD (119 aa)) are excised as a propeptide. A Glycyl lysine isopeptide (Lys-Gly) (interchain with G-Cter in ubiquitin) cross-link involves residue K134. Active-site residues include H237 and C285. A propeptide spans 298 to 316 (SVGVSGNLSLPTTEEFEDD) (interdomain linker). The residue at position 302 (S302) is a Phosphoserine.

Belongs to the peptidase C14A family. Heterotetramer that consists of two anti-parallel arranged heterodimers, each one formed by a 20 kDa (Caspase-1 subunit p20) and a 10 kDa (Caspase-1 subunit p10) subunit. May be a component of the inflammasome, a protein complex which also includes PYCARD, CARD8 and NLRP2 and whose function would be the activation of pro-inflammatory caspases. Component of the AIM2 PANoptosome complex, a multiprotein complex that drives inflammatory cell death (PANoptosis). Interacts with CARD8; interacts with the released C-terminus of CARD8 which forms an inflammasome and directly activates CASP1 to promote pyroptosis. Both the p10 and p20 subunits interact with MEFV. Interacts with CARD17P/INCA and CARD18. Interacts with SERPINB1; this interaction regulates CASP1 activity. As to quaternary structure, heterotetramer that consists of two anti-parallel arranged heterodimers, each one formed by a 20 kDa (Caspase-1 subunit p20) and a 10 kDa (Caspase-1 subunit p10) subunit. Can form a heterodimer with isoform epsilon which then has an inhibitory effect. In terms of assembly, heterotetramer that consists of two anti-parallel arranged heterodimers, each one formed by a 20 kDa (Caspase-1 subunit p20) and a 10 kDa (Caspase-1 subunit p10) subunit. Can form a heterodimer with Caspase-1 subunit p20 which then has an inhibitory effect. Post-translationally, the two subunits are derived from the precursor sequence by an autocatalytic mechanism. In terms of processing, ubiquitinated via 'Lys-11'-linked polyubiquitination. Deubiquitinated by USP8. Cleavage in the interdomain linker region is required to induce pyroptosis. In terms of tissue distribution, expressed in larger amounts in spleen and lung. Detected in liver, heart, small intestine, colon, thymus, prostate, skeletal muscle, peripheral blood leukocytes, kidney and testis. No expression in the brain.

It is found in the cytoplasm. The protein localises to the cell membrane. The catalysed reaction is Strict requirement for an Asp residue at position P1 and has a preferred cleavage sequence of Tyr-Val-Ala-Asp-|-.. With respect to regulation, (Microbial infection) Specifically inhibited by the cowpox virus Crma protein. Its function is as follows. Thiol protease involved in a variety of inflammatory processes by proteolytically cleaving other proteins, such as the precursors of the inflammatory cytokines interleukin-1 beta (IL1B) and interleukin 18 (IL18) as well as the pyroptosis inducer Gasdermin-D (GSDMD), into active mature peptides. Plays a key role in cell immunity as an inflammatory response initiator: once activated through formation of an inflammasome complex, it initiates a pro-inflammatory response through the cleavage of the two inflammatory cytokines IL1B and IL18, releasing the mature cytokines which are involved in a variety of inflammatory processes. Cleaves a tetrapeptide after an Asp residue at position P1. Also initiates pyroptosis, a programmed lytic cell death pathway, through cleavage of GSDMD. In contrast to cleavage of interleukin IL1B, recognition and cleavage of GSDMD is not strictly dependent on the consensus cleavage site but depends on an exosite interface on CASP1 that recognizes and binds the Gasdermin-D, C-terminal (GSDMD-CT) part. Cleaves and activates CASP7 in response to bacterial infection, promoting plasma membrane repair. Upon inflammasome activation, during DNA virus infection but not RNA virus challenge, controls antiviral immunity through the cleavage of CGAS, rendering it inactive. In apoptotic cells, cleaves SPHK2 which is released from cells and remains enzymatically active extracellularly. In terms of biological role, apoptosis inactive. The sequence is that of Caspase-1 (CASP1) from Homo sapiens (Human).